Here is a 508-residue protein sequence, read N- to C-terminus: Phenylalanine--tRNA ligase alpha subunit (508 aa).

Alanine 2 is modified (N-acetylalanine). Serine 193 and serine 301 each carry phosphoserine. Lysine 311 is modified (N6-acetyllysine). L-phenylalanine-binding positions include threonine 329, 372–374, and tyrosine 412; that span reads QIE. Glutamate 414 provides a ligand contact to Mg(2+). Phenylalanine 438 provides a ligand contact to L-phenylalanine.

Belongs to the class-II aminoacyl-tRNA synthetase family. Phe-tRNA synthetase alpha subunit type 2 subfamily. Heterotetramer; dimer of two heterodimers formed by FARSA and FARSB. It depends on Mg(2+) as a cofactor.

Its subcellular location is the cytoplasm. It catalyses the reaction tRNA(Phe) + L-phenylalanine + ATP = L-phenylalanyl-tRNA(Phe) + AMP + diphosphate + H(+). This chain is Phenylalanine--tRNA ligase alpha subunit (Farsa), found in Mus musculus (Mouse).